Reading from the N-terminus, the 258-residue chain is uncharacterized protein (258 aa).

The 133-residue stretch at 16–148 folds into the Cyclin N-terminal domain; the sequence is EAFDSFEYAE…VLRALNFDTH (133 aa).

The protein belongs to the cyclin family. Cyclin L subfamily.

It localises to the cytoplasm. Its subcellular location is the nucleus. This is an uncharacterized protein from Schizosaccharomyces pombe (strain 972 / ATCC 24843) (Fission yeast).